Reading from the N-terminus, the 388-residue chain is Arginine biosynthesis bifunctional protein ArgJ (388 aa).

The substrate site is built by Thr-150, Lys-172, Thr-183, Glu-263, Asn-383, and Ser-388. Catalysis depends on Thr-183, which acts as the Nucleophile.

Belongs to the ArgJ family. As to quaternary structure, heterotetramer of two alpha and two beta chains.

Its subcellular location is the cytoplasm. It catalyses the reaction N(2)-acetyl-L-ornithine + L-glutamate = N-acetyl-L-glutamate + L-ornithine. It carries out the reaction L-glutamate + acetyl-CoA = N-acetyl-L-glutamate + CoA + H(+). The protein operates within amino-acid biosynthesis; L-arginine biosynthesis; L-ornithine and N-acetyl-L-glutamate from L-glutamate and N(2)-acetyl-L-ornithine (cyclic): step 1/1. Its pathway is amino-acid biosynthesis; L-arginine biosynthesis; N(2)-acetyl-L-ornithine from L-glutamate: step 1/4. In terms of biological role, catalyzes two activities which are involved in the cyclic version of arginine biosynthesis: the synthesis of N-acetylglutamate from glutamate and acetyl-CoA as the acetyl donor, and of ornithine by transacetylation between N(2)-acetylornithine and glutamate. This Corynebacterium glutamicum (strain ATCC 13032 / DSM 20300 / JCM 1318 / BCRC 11384 / CCUG 27702 / LMG 3730 / NBRC 12168 / NCIMB 10025 / NRRL B-2784 / 534) protein is Arginine biosynthesis bifunctional protein ArgJ.